A 204-amino-acid polypeptide reads, in one-letter code: MGNKWSKSWPQVRDRMRRAAPAPAADGVGAVSQDLAKHGAITSSNTAATNDDCAWLEAQTEEEVGFPVRPQVPLRPMTYKGAFDLSFFLKEKGGLDGLIYSKKRQEILDLWVHNTQGYFPDWQNYTPGPGTXYPLTFGWCFKLVPVDPSEVEEANEGENNCLLHPACQHGIEDEEREVLKWKFDSSLARRHIARELHPEFYKDC.

The tract at residues 1–27 (MGNKWSKSWPQVRDRMRRAAPAPAADG) is disordered. Glycine 2 carries N-myristoyl glycine; by host lipidation. At serine 6 the chain carries Phosphoserine; by host. An acidic; interacts with host PACS1 and PACS2; stabilizes the interaction of NEF/MHC-I with host AP1M1; necessary for MHC-I internalization region spans residues 60-63 (TEEE). The interval 67–76 (PVRPQVPLRP) is SH3-binding; interaction with Src family tyrosine kinases. A PxxP; stabilizes the interaction of NEF/MHC-I with host AP1M1; necessary for MHC-I internalization motif is present at residues 70–73 (PQVP). Positions 106 to 122 (EILDLWVHNTQGYFPDW) are mediates dimerization, Nef-PTE1 interaction. Residues 146–178 (VDPSEVEEANEGENNCLLHPACQHGIEDEEREV) are binding to ATP6V1H. The Dileucine internalization motif; necessary for CD4 internalization signature appears at 162 to 163 (LL). Residues 172–173 (ED) carry the Diacidic; necessary for CD4 internalization motif.

Belongs to the lentivirus primate group Nef protein family. In terms of assembly, monomer; cytosolic form. Homodimer; membrane bound form. Interacts with Nef associated p21-activated kinase (PAK2); this interaction activates PAK2. Associates with the Nef-MHC-I-AP1 complex; this complex is required for MHC-I internalization. Interacts (via C-terminus) with host PI3-kinase. Interacts with host PACS1; this interaction seems to be weak. Interacts with host PACS2. Interacts with host LCK and MAPK3; these interactions inhibit the kinase activity of the latter. Interacts with host ATP6V1H; this interaction may play a role in CD4 endocytosis. Associates with the CD4-Nef-AP2 complex; this complex is required for CD4 internalization. Interacts with host AP2 subunit alpha and AP2 subunit sigma2. Interacts with TCR-zeta chain; this interaction up-regulates the Fas ligand (FasL) surface expression. Interacts with host HCK, LYN, and SRC; these interactions activate the Src family kinases. Interacts with MAP3K5; this interaction inhibits the Fas and TNFR-mediated death signals. Interacts with beta-COP and PTE1. Interacts with human RACK1; this increases Nef phosphorylation by PKC. Interacts with TP53; this interaction decreases the half-life of TP53, protecting the infected cell against p53-mediated apoptosis. The virion-associated Nef proteins are cleaved by the viral protease to release the soluble C-terminal core protein. Nef is probably cleaved concomitantly with viral structural proteins on maturation of virus particles. In terms of processing, myristoylated. Post-translationally, phosphorylated on serine residues, probably by host PKCdelta and theta.

It localises to the host cell membrane. The protein resides in the virion. It is found in the secreted. The protein localises to the host Golgi apparatus membrane. Factor of infectivity and pathogenicity, required for optimal virus replication. Alters numerous pathways of T-lymphocyte function and down-regulates immunity surface molecules in order to evade host defense and increase viral infectivity. Alters the functionality of other immunity cells, like dendritic cells, monocytes/macrophages and NK cells. In terms of biological role, in infected CD4(+) T-lymphocytes, down-regulates the surface MHC-I, mature MHC-II, CD4, CD28, CCR5 and CXCR4 molecules. Mediates internalization and degradation of host CD4 through the interaction of with the cytoplasmic tail of CD4, the recruitment of AP-2 (clathrin adapter protein complex 2), internalization through clathrin coated pits, and subsequent transport to endosomes and lysosomes for degradation. Diverts host MHC-I molecules to the trans-Golgi network-associated endosomal compartments by an endocytic pathway to finally target them for degradation. MHC-I down-regulation may involve AP-1 (clathrin adapter protein complex 1) or possibly Src family kinase-ZAP70/Syk-PI3K cascade recruited by PACS2. In consequence infected cells are masked for immune recognition by cytotoxic T-lymphocytes. Decreasing the number of immune receptors also prevents reinfection by more HIV particles (superinfection). Down-regulates host SERINC3 and SERINC5 thereby excluding these proteins from the viral particles. Virion infectivity is drastically higher when SERINC3 or SERINC5 are excluded from the viral envelope, because these host antiviral proteins impair the membrane fusion event necessary for subsequent virion penetration. Functionally, bypasses host T-cell signaling by inducing a transcriptional program nearly identical to that of anti-CD3 cell activation. Interaction with TCR-zeta chain up-regulates the Fas ligand (FasL). Increasing surface FasL molecules and decreasing surface MHC-I molecules on infected CD4(+) cells send attacking cytotoxic CD8+ T-lymphocytes into apoptosis. Its function is as follows. Plays a role in optimizing the host cell environment for viral replication without causing cell death by apoptosis. Protects the infected cells from apoptosis in order to keep them alive until the next virus generation is ready to strike. Inhibits the Fas and TNFR-mediated death signals by blocking MAP3K5/ASK1. Decreases the half-life of TP53, protecting the infected cell against p53-mediated apoptosis. Inhibits the apoptotic signals regulated by the Bcl-2 family proteins through the formation of a Nef/PI3-kinase/PAK2 complex that leads to activation of PAK2 and induces phosphorylation of host BAD. Extracellular Nef protein targets CD4(+) T-lymphocytes for apoptosis by interacting with CXCR4 surface receptors. In Homo sapiens (Human), this protein is Protein Nef.